The chain runs to 432 residues: Trigger factor (432 aa).

One can recognise a PPIase FKBP-type domain in the interval E161–P246.

The protein belongs to the FKBP-type PPIase family. Tig subfamily.

The protein resides in the cytoplasm. The enzyme catalyses [protein]-peptidylproline (omega=180) = [protein]-peptidylproline (omega=0). Its function is as follows. Involved in protein export. Acts as a chaperone by maintaining the newly synthesized protein in an open conformation. Functions as a peptidyl-prolyl cis-trans isomerase. The polypeptide is Trigger factor (Klebsiella pneumoniae subsp. pneumoniae (strain ATCC 700721 / MGH 78578)).